The chain runs to 250 residues: Bacteriorhodopsin-I (250 aa).

Helical transmembrane passes span 7-27, 42-62, 81-101, 114-134, 139-159, 185-205, and 207-227; these read EGIWLWLGTAGMFLGMLYFIA, IATILITAIAFVNYLAMALGF, YTDWLFTTPLLLYDLGLLAGA, VLMIGTGVVATLSAGSGVLSA, LVWWGISTAFLLVLLYFLFSS, VWLVYPVWWLVGSEGLGLVGI, and IETAGFMVIDLVAKVGFGIIL. Position 220 is an N6-(retinylidene)lysine (Lys220).

The protein belongs to the archaeal/bacterial/fungal opsin family. The covalent binding of retinal to the apoprotein, bacterioopsin, generates bacteriorhodopsin.

The protein resides in the membrane. Functionally, light-driven proton pump. This Haloarcula marismortui (strain ATCC 43049 / DSM 3752 / JCM 8966 / VKM B-1809) (Halobacterium marismortui) protein is Bacteriorhodopsin-I (bop).